Reading from the N-terminus, the 453-residue chain is 4,4'-diapolycopene-4,4'-dial dehydrogenase (453 aa).

A compositionally biased stretch (basic and acidic residues) spans 1 to 20 (MPDNDSHSLKSLPERQREDL). The disordered stretch occupies residues 1–23 (MPDNDSHSLKSLPERQREDLFSA). Active-site residues include E215 and C249.

It belongs to the aldehyde dehydrogenase family.

The enzyme catalyses all-trans-4,4'-diapolycopene-4,4'-dial + 2 A + 2 H2O = all-trans-4,4'-diapolycopene-4,4'-dioate + 2 AH2 + 2 H(+). It functions in the pathway carotenoid biosynthesis. In terms of biological role, involved in the biosynthesis of the major C30 carotenoid 4,4'-diapolycopene-4,4'-dioic acid, which protects B.firmus from peroxidative reactions. Catalyzes the oxidation of 4,4'-diapolycopene-4,4'-dial to yield 4,4'-diapolycopene-4,4'-dioic aci. This Cytobacillus firmus (Bacillus firmus) protein is 4,4'-diapolycopene-4,4'-dial dehydrogenase.